Reading from the N-terminus, the 508-residue chain is UDP-N-acetylmuramyl-tripeptide synthetase (508 aa).

Serine 35 lines the UDP-N-acetyl-alpha-D-muramoyl-L-alanyl-D-glutamate pocket. 118–124 lines the ATP pocket; the sequence is GTDGKSS. UDP-N-acetyl-alpha-D-muramoyl-L-alanyl-D-glutamate contacts are provided by residues 163–164, threonine 190, and arginine 200; that span reads ST. At lysine 232 the chain carries N6-carboxylysine.

Belongs to the MurCDEF family. MurE subfamily. Carboxylation is probably crucial for Mg(2+) binding and, consequently, for the gamma-phosphate positioning of ATP.

Its subcellular location is the cytoplasm. The protein operates within cell wall biogenesis; peptidoglycan biosynthesis. Functionally, catalyzes the addition of an amino acid to the nucleotide precursor UDP-N-acetylmuramoyl-L-alanyl-D-glutamate (UMAG) in the biosynthesis of bacterial cell-wall peptidoglycan. In Borreliella burgdorferi (strain ATCC 35210 / DSM 4680 / CIP 102532 / B31) (Borrelia burgdorferi), this protein is UDP-N-acetylmuramyl-tripeptide synthetase.